Consider the following 541-residue polypeptide: Chaperonin GroEL (541 aa).

ATP is bound by residues 29–32, 86–90, G413, and D494; these read TLGP and DGTTT.

It belongs to the chaperonin (HSP60) family. Forms a cylinder of 14 subunits composed of two heptameric rings stacked back-to-back. Interacts with the co-chaperonin GroES.

It is found in the cytoplasm. The catalysed reaction is ATP + H2O + a folded polypeptide = ADP + phosphate + an unfolded polypeptide.. In terms of biological role, together with its co-chaperonin GroES, plays an essential role in assisting protein folding. The GroEL-GroES system forms a nano-cage that allows encapsulation of the non-native substrate proteins and provides a physical environment optimized to promote and accelerate protein folding. This chain is Chaperonin GroEL, found in Acetivibrio thermocellus (strain ATCC 27405 / DSM 1237 / JCM 9322 / NBRC 103400 / NCIMB 10682 / NRRL B-4536 / VPI 7372) (Clostridium thermocellum).